We begin with the raw amino-acid sequence, 455 residues long: Glycosyl hydrolase family 109 protein (455 aa).

The segment at residues 1–33 (MAGIDRRGFLKASMASVAAAALAGCASQQGTSA) is a signal peptide (tat-type signal). NAD(+) is bound by residues 62–63 (ER), Asp84, Gln112, 133–136 (WALH), 153–154 (EV), and Asn182. Residues Tyr211, Arg230, 242–245 (YPTH), and Tyr324 contribute to the substrate site. Residue Tyr242 participates in NAD(+) binding.

The protein belongs to the Gfo/Idh/MocA family. Glycosyl hydrolase 109 subfamily. Requires NAD(+) as cofactor. Predicted to be exported by the Tat system. The position of the signal peptide cleavage has not been experimentally proven.

Glycosidase. This Shewanella amazonensis (strain ATCC BAA-1098 / SB2B) protein is Glycosyl hydrolase family 109 protein.